A 534-amino-acid polypeptide reads, in one-letter code: CTP synthase (534 aa).

The tract at residues 1–268 (MSVKYIFVTG…AKIVCKRLGL (268 aa)) is amidoligase domain. A CTP-binding site is contributed by Ser14. Ser14 is a UTP binding site. 15 to 20 (GLGKGI) lines the ATP pocket. Residue Tyr55 coordinates L-glutamine. Asp72 contributes to the ATP binding site. The Mg(2+) site is built by Asp72 and Glu142. Residues 149 to 151 (DIE), 189 to 194 (KTKPTQ), and Lys225 each bind CTP. Residues 189-194 (KTKPTQ) and Lys225 contribute to the UTP site. A Glutamine amidotransferase type-1 domain is found at 293–534 (TIGLVGKYVE…VRAAYEYKTK (242 aa)). Residue Gly355 coordinates L-glutamine. Cys382 serves as the catalytic Nucleophile; for glutamine hydrolysis. L-glutamine-binding positions include 383–386 (LGMQ), Glu406, and Arg462. Active-site residues include His507 and Glu509.

Belongs to the CTP synthase family. As to quaternary structure, homotetramer.

The enzyme catalyses UTP + L-glutamine + ATP + H2O = CTP + L-glutamate + ADP + phosphate + 2 H(+). The catalysed reaction is L-glutamine + H2O = L-glutamate + NH4(+). It carries out the reaction UTP + NH4(+) + ATP = CTP + ADP + phosphate + 2 H(+). It participates in pyrimidine metabolism; CTP biosynthesis via de novo pathway; CTP from UDP: step 2/2. With respect to regulation, allosterically activated by GTP, when glutamine is the substrate; GTP has no effect on the reaction when ammonia is the substrate. The allosteric effector GTP functions by stabilizing the protein conformation that binds the tetrahedral intermediate(s) formed during glutamine hydrolysis. Inhibited by the product CTP, via allosteric rather than competitive inhibition. Its function is as follows. Catalyzes the ATP-dependent amination of UTP to CTP with either L-glutamine or ammonia as the source of nitrogen. Regulates intracellular CTP levels through interactions with the four ribonucleotide triphosphates. In Ruminiclostridium cellulolyticum (strain ATCC 35319 / DSM 5812 / JCM 6584 / H10) (Clostridium cellulolyticum), this protein is CTP synthase.